The sequence spans 193 residues: MWLIAGLGNPGLQYQNNRHNIGFMAIDAIYQSFSFSPWSKKFQAEISTGLINGKKTFLLKPQTFMNLSGQAIGEALRFYKLDLKNFIVIYDELDLPPGRVRVKIGGGNNGHNGIKSIDAHCGTDYCRIRLGIGRPNSKELVYQHVLGNFTKSDQEWLPSLLEAIAKNIALLIKGNKCLFMNEISQAMKNKNLQ.

Tyr14 contributes to the tRNA binding site. Residue His19 is the Proton acceptor of the active site. Residues Phe64, Asn66, and Asn112 each coordinate tRNA.

Belongs to the PTH family. Monomer.

The protein resides in the cytoplasm. It carries out the reaction an N-acyl-L-alpha-aminoacyl-tRNA + H2O = an N-acyl-L-amino acid + a tRNA + H(+). In terms of biological role, hydrolyzes ribosome-free peptidyl-tRNAs (with 1 or more amino acids incorporated), which drop off the ribosome during protein synthesis, or as a result of ribosome stalling. Catalyzes the release of premature peptidyl moieties from peptidyl-tRNA molecules trapped in stalled 50S ribosomal subunits, and thus maintains levels of free tRNAs and 50S ribosomes. The polypeptide is Peptidyl-tRNA hydrolase (Bartonella henselae (strain ATCC 49882 / DSM 28221 / CCUG 30454 / Houston 1) (Rochalimaea henselae)).